A 156-amino-acid chain; its full sequence is Translationally controlled tumor protein 2 (156 aa).

The region spanning 1-156 (MLVYQDILTG…LAYGLKEIKC (156 aa)) is the TCTP domain.

The protein belongs to the TCTP family. As to expression, expressed in stems, cauline leaves, minor veins of rosette leaves, roots, lateral root primordia, vascular tissues of petioles and inflorescences, base of siliques, papillae and ovules. Not detected in root meristems, anthers or seeds. Expressed in stomata, trichomes and root cortex.

It is found in the nucleus. The protein localises to the cytoplasm. Regulates proliferation. Induces whole plant regeneration when expressed in heterologous systems. Involved in root growth and lateral root development, with a probable role in cell reprogramming. The long-distance transport of TCTP RNA and/or protein in plants may have an important role in regulation of growth and development. The protein is Translationally controlled tumor protein 2 of Arabidopsis thaliana (Mouse-ear cress).